We begin with the raw amino-acid sequence, 658 residues long: Structure-specific endonuclease subunit SLX1 (658 aa).

The 81-residue stretch at 12 to 92 folds into the GIY-YIG domain; sequence PFYACYFLRS…AKPHLSRHLK (81 aa). 4 disordered regions span residues 29–52, 239–269, 288–328, and 594–658; these read YIGS…QGAY, GVAE…ETLP, PIPQ…NGVD, and TTSR…IDLT. 2 stretches are compositionally biased toward basic and acidic residues: residues 308-324 and 627-640; these read KLSD…HDAE and SKID…DTKK. The segment covering 641–652 has biased composition (polar residues); sequence NTTQKAKSNETS.

Belongs to the SLX1 family. Forms a heterodimer with SLX4. The cofactor is a divalent metal cation.

Its subcellular location is the nucleus. Its function is as follows. Catalytic subunit of the SLX1-SLX4 structure-specific endonuclease that resolves DNA secondary structures generated during DNA repair and recombination. Has endonuclease activity towards branched DNA substrates, introducing single-strand cuts in duplex DNA close to junctions with ss-DNA. This is Structure-specific endonuclease subunit SLX1 from Mycosarcoma maydis (Corn smut fungus).